A 162-amino-acid polypeptide reads, in one-letter code: 2-C-methyl-D-erythritol 2,4-cyclodiphosphate synthase (162 aa).

Residues Asp12 and His14 each contribute to the a divalent metal cation site. 4-CDP-2-C-methyl-D-erythritol 2-phosphate is bound by residues 12-14 and 38-39; these read DVH and HS. His46 contributes to the a divalent metal cation binding site. 4-CDP-2-C-methyl-D-erythritol 2-phosphate-binding positions include 60 to 62, 65 to 69, and Arg146; these read DIG and FPDTD.

Belongs to the IspF family. As to quaternary structure, homotrimer. A divalent metal cation is required as a cofactor.

It catalyses the reaction 4-CDP-2-C-methyl-D-erythritol 2-phosphate = 2-C-methyl-D-erythritol 2,4-cyclic diphosphate + CMP. It participates in isoprenoid biosynthesis; isopentenyl diphosphate biosynthesis via DXP pathway; isopentenyl diphosphate from 1-deoxy-D-xylulose 5-phosphate: step 4/6. In terms of biological role, involved in the biosynthesis of isopentenyl diphosphate (IPP) and dimethylallyl diphosphate (DMAPP), two major building blocks of isoprenoid compounds. Catalyzes the conversion of 4-diphosphocytidyl-2-C-methyl-D-erythritol 2-phosphate (CDP-ME2P) to 2-C-methyl-D-erythritol 2,4-cyclodiphosphate (ME-CPP) with a corresponding release of cytidine 5-monophosphate (CMP). This Bordetella parapertussis (strain 12822 / ATCC BAA-587 / NCTC 13253) protein is 2-C-methyl-D-erythritol 2,4-cyclodiphosphate synthase.